A 431-amino-acid chain; its full sequence is Serine/threonine-protein kinase Sgk1 (431 aa).

The interval 1–60 is necessary for localization to the mitochondria; it reads MTVKTEAARGPLTYSRMRGMVAILIAFMKQRRMGLNDFIQKIANNSYACKHTEVQSILKI. The interval 66–92 is disordered; sequence PELMNANPSPPPSPSQQINLGPSSNPH. At Ser74 the chain carries Phosphoserine. The residue at position 78 (Ser78) is a Phosphoserine; by MAPK7. A compositionally biased stretch (polar residues) spans 81-91; sequence QQINLGPSSNP. Positions 98–355 constitute a Protein kinase domain; the sequence is FHFLKVIGKG…FMEIRNHVFF (258 aa). ATP is bound by residues 104–112 and Lys127; that span reads IGKGSFGKV. The Nuclear localization signal motif lies at 131–141; the sequence is KKAILKKKEEK. Catalysis depends on Asp222, which acts as the Proton acceptor. A Phosphothreonine; by PDPK1 modification is found at Thr256. Residues 356–431 enclose the AGC-kinase C-terminal domain; that stretch reads SLINWDDLIN…SYAPPMDSFL (76 aa). Phosphothreonine; by PKA is present on Thr369. Ser397, Ser401, and Ser422 each carry phosphoserine.

This sequence belongs to the protein kinase superfamily. AGC Ser/Thr protein kinase family. Homodimer; disulfide-linked. Forms a trimeric complex with FBXW7 and NOTCH1. Interacts with MAPK3/ERK1, MAPK1/ERK2, MAP2K1/MEK1, MAP2K2/MEK2, NEDD4, NEDD4L, MAPT/TAU, MAPK7, CREB1, SLC9A3R2/NHERF2 and KCNJ1/ROMK1. Associates with the mammalian target of rapamycin complex 2 (mTORC2) via an interaction with MAPKAP1/SIN1. Post-translationally, regulated by phosphorylation. Activated by phosphorylation on Ser-422 by mTORC2, transforming it into a substrate for PDPK1 which phosphorylates it on Thr-256. Phosphorylation on Ser-397 and Ser-401 are also essential for its activity. Phosphorylation on Ser-78 by MAPK7 is required for growth factor-induced cell cycle progression. Ubiquitinated by NEDD4L; which promotes proteasomal degradation. Ubiquitinated by SYVN1 at the endoplasmic reticulum; which promotes rapid proteasomal degradation and maintains a high turnover rate in resting cells.

It is found in the cytoplasm. The protein localises to the nucleus. The protein resides in the endoplasmic reticulum membrane. Its subcellular location is the cell membrane. It localises to the mitochondrion. It catalyses the reaction L-seryl-[protein] + ATP = O-phospho-L-seryl-[protein] + ADP + H(+). The enzyme catalyses L-threonyl-[protein] + ATP = O-phospho-L-threonyl-[protein] + ADP + H(+). Two specific sites, one in the kinase domain (Thr-256) and the other in the C-terminal regulatory region (Ser-422), need to be phosphorylated for its full activation. Phosphorylation at Ser-397 and Ser-401 are also essential for its activity. Activated by WNK1, WNK2, WNK3 and WNK4; which promote phosphorylation by mTORC2. Functionally, serine/threonine-protein kinase which is involved in the regulation of a wide variety of ion channels, membrane transporters, cellular enzymes, transcription factors, neuronal excitability, cell growth, proliferation, survival, migration and apoptosis. Plays an important role in cellular stress response. Contributes to regulation of renal Na(+) retention, renal K(+) elimination, salt appetite, gastric acid secretion, intestinal Na(+)/H(+) exchange and nutrient transport, insulin-dependent salt sensitivity of blood pressure, salt sensitivity of peripheral glucose uptake, cardiac repolarization and memory consolidation. Up-regulates Na(+) channels: SCNN1A/ENAC, SCN5A and ASIC1/ACCN2, K(+) channels: KCNJ1/ROMK1, KCNA1-5, KCNQ1-5 and KCNE1, epithelial Ca(2+) channels: TRPV5 and TRPV6, chloride channels: BSND, CLCN2 and CFTR, glutamate transporters: SLC1A3/EAAT1, SLC1A2 /EAAT2, SLC1A1/EAAT3, SLC1A6/EAAT4 and SLC1A7/EAAT5, amino acid transporters: SLC1A5/ASCT2, SLC38A1/SN1 and SLC6A19, creatine transporter: SLC6A8, Na(+)/dicarboxylate cotransporter: SLC13A2/NADC1, Na(+)-dependent phosphate cotransporter: SLC34A2/NAPI-2B, glutamate receptor: GRIK2/GLUR6. Up-regulates carriers: SLC9A3/NHE3, SLC12A1/NKCC2, SLC12A3/NCC, SLC5A3/SMIT, SLC2A1/GLUT1, SLC5A1/SGLT1 and SLC15A2/PEPT2. Regulates enzymes: GSK3A/B, PMM2 and Na(+)/K(+) ATPase, and transcription factors: CTNNB1 and nuclear factor NF-kappa-B. Stimulates sodium transport into epithelial cells by enhancing the stability and expression of SCNN1A/ENAC. This is achieved by phosphorylating the NEDD4L ubiquitin E3 ligase, promoting its interaction with 14-3-3 proteins, thereby preventing it from binding to SCNN1A/ENAC and targeting it for degradation. Regulates store-operated Ca(+2) entry (SOCE) by stimulating ORAI1 and STIM1. Regulates KCNJ1/ROMK1 directly via its phosphorylation or indirectly via increased interaction with SLC9A3R2/NHERF2. Phosphorylates MDM2 and activates MDM2-dependent ubiquitination of p53/TP53. Phosphorylates MAPT/TAU and mediates microtubule depolymerization and neurite formation in hippocampal neurons. Phosphorylates SLC2A4/GLUT4 and up-regulates its activity. Phosphorylates APBB1/FE65 and promotes its localization to the nucleus. Phosphorylates MAPK1/ERK2 and activates it by enhancing its interaction with MAP2K1/MEK1 and MAP2K2/MEK2. Phosphorylates FBXW7 and plays an inhibitory role in the NOTCH1 signaling. Phosphorylates FOXO1 resulting in its relocalization from the nucleus to the cytoplasm. Phosphorylates FOXO3, promoting its exit from the nucleus and interference with FOXO3-dependent transcription. Phosphorylates BRAF and MAP3K3/MEKK3 and inhibits their activity. Phosphorylates SLC9A3/NHE3 in response to dexamethasone, resulting in its activation and increased localization at the cell membrane. Phosphorylates CREB1. Necessary for vascular remodeling during angiogenesis. This Oryctolagus cuniculus (Rabbit) protein is Serine/threonine-protein kinase Sgk1 (SGK1).